The sequence spans 610 residues: UvrABC system protein C (610 aa).

The GIY-YIG domain occupies 13–92 (TLPGVYLMKN…IKQHKPRYNA (80 aa)). In terms of domain architecture, UVR spans 204 to 239 (KDVLKDLYEEMRLLSEQLEFEKANHLLRTIRYIEKT).

It belongs to the UvrC family. As to quaternary structure, interacts with UvrB in an incision complex.

The protein resides in the cytoplasm. In terms of biological role, the UvrABC repair system catalyzes the recognition and processing of DNA lesions. UvrC both incises the 5' and 3' sides of the lesion. The N-terminal half is responsible for the 3' incision and the C-terminal half is responsible for the 5' incision. The polypeptide is UvrABC system protein C (Protochlamydia amoebophila (strain UWE25)).